Consider the following 228-residue polypeptide: ATP-dependent dethiobiotin synthetase BioD (228 aa).

12–17 (EIGKTT) contributes to the ATP binding site. Threonine 16 is a Mg(2+) binding site. The active site involves lysine 37. Serine 41 lines the substrate pocket. Residues aspartate 54, 116-119 (EGAG), and 205-207 (PRL) each bind ATP. Mg(2+) is bound by residues aspartate 54 and glutamate 116.

The protein belongs to the dethiobiotin synthetase family. In terms of assembly, homodimer. The cofactor is Mg(2+).

The protein resides in the cytoplasm. It catalyses the reaction (7R,8S)-7,8-diammoniononanoate + CO2 + ATP = (4R,5S)-dethiobiotin + ADP + phosphate + 3 H(+). The protein operates within cofactor biosynthesis; biotin biosynthesis; biotin from 7,8-diaminononanoate: step 1/2. Its function is as follows. Catalyzes a mechanistically unusual reaction, the ATP-dependent insertion of CO2 between the N7 and N8 nitrogen atoms of 7,8-diaminopelargonic acid (DAPA, also called 7,8-diammoniononanoate) to form a ureido ring. The sequence is that of ATP-dependent dethiobiotin synthetase BioD from Pseudomonas aeruginosa (strain UCBPP-PA14).